The sequence spans 283 residues: Pantothenate synthetase (283 aa).

Position 30–37 (30–37 (MGNLHDGH)) interacts with ATP. His-37 acts as the Proton donor in catalysis. Gln-61 is a binding site for (R)-pantoate. Gln-61 contributes to the beta-alanine binding site. Residue 149–152 (GEKD) participates in ATP binding. Gln-155 contributes to the (R)-pantoate binding site. Residue 186–189 (LSSR) coordinates ATP.

It belongs to the pantothenate synthetase family. In terms of assembly, homodimer.

The protein localises to the cytoplasm. The catalysed reaction is (R)-pantoate + beta-alanine + ATP = (R)-pantothenate + AMP + diphosphate + H(+). It functions in the pathway cofactor biosynthesis; (R)-pantothenate biosynthesis; (R)-pantothenate from (R)-pantoate and beta-alanine: step 1/1. In terms of biological role, catalyzes the condensation of pantoate with beta-alanine in an ATP-dependent reaction via a pantoyl-adenylate intermediate. This is Pantothenate synthetase from Escherichia coli (strain SMS-3-5 / SECEC).